A 430-amino-acid chain; its full sequence is Tol-Pal system protein TolB (430 aa).

Residues 1-21 form the signal peptide; sequence MKQALRVAFGFLILWASVLHA.

This sequence belongs to the TolB family. As to quaternary structure, the Tol-Pal system is composed of five core proteins: the inner membrane proteins TolA, TolQ and TolR, the periplasmic protein TolB and the outer membrane protein Pal. They form a network linking the inner and outer membranes and the peptidoglycan layer.

It localises to the periplasm. Part of the Tol-Pal system, which plays a role in outer membrane invagination during cell division and is important for maintaining outer membrane integrity. TolB occupies a key intermediary position in the Tol-Pal system because it communicates directly with both membrane-embedded components, Pal in the outer membrane and TolA in the inner membrane. In Escherichia coli O139:H28 (strain E24377A / ETEC), this protein is Tol-Pal system protein TolB.